The chain runs to 529 residues: MPPPHRVFALPRQQSLLLPAVINPFVHDLSLSTADITKCFLLGIILVPLRAIFLLLVLLVMWPVSVIITFGQSLKGVVEPMTGWRRFLHRRVMTFLGRMYFFGMGFKVVVKGKKASTLEAPILAVAPHSSFFDAIACIESGLPSTVSRIESLEAPIFGRFLRCVQPVLVSRTDPDSRRNTIIEIERRAKSGGHWPQVLIFPEGTCTNRSCLITFKQGGFVPGVPVQPVLIRYPNKLDTVTWTWQGPKSARLLLLTLCQLCTTVEVEFLPPQVPTEMEKKCPLKFAQSVRAVMAKSLKLPVTDHTYEDCRLMIAAGELTLPMEAGLVEFTKISRKLELKWDNVKKELESFANIACSCKGGRITVEEFASFLKLPISPALQQLFALFDRNGDGTIDFREYVIGVTVLCRPANNEEVIQTAFKLFDIDEDNCITQEEFSSLLRSALGVCDLDVHSLFREIDADGSGHITYDEFRSFALNHPEYAKLFTTYIELQRYQGLQGDETDFDSAFSHCCTAAYDEYQEDSASDKKDD.

Residues Met-1–Arg-50 lie on the Cytoplasmic side of the membrane. Residues Ala-51 to Gly-71 form a helical; Signal-anchor for type II membrane protein membrane-spanning segment. The Lumenal portion of the chain corresponds to Gln-72–Asp-529. The HXXXXD motif motif lies at His-128–Asp-133. The EGTC motif motif lies at Glu-202–Cys-205. N-linked (GlcNAc...) asparagine glycosylation occurs at Asn-207. 3 consecutive EF-hand domains span residues Pro-373 to Pro-408, Asn-410 to Val-445, and Asp-449 to Tyr-480. Asp-386, Asn-388, Asp-390, Thr-392, Glu-397, Asp-423, Asp-425, Asp-427, Cys-429, Glu-434, Asp-458, Asp-460, Ser-462, His-464, and Glu-469 together coordinate Ca(2+).

The protein belongs to the 1-acyl-sn-glycerol-3-phosphate acyltransferase family.

It localises to the endoplasmic reticulum membrane. The protein resides in the golgi apparatus membrane. The protein localises to the cell membrane. Its subcellular location is the lipid droplet. The catalysed reaction is a 1-acyl-sn-glycero-3-phosphocholine + an acyl-CoA = a 1,2-diacyl-sn-glycero-3-phosphocholine + CoA. It carries out the reaction a 1-O-alkyl-sn-glycero-3-phosphocholine + acetyl-CoA = a 1-O-alkyl-2-acetyl-sn-glycero-3-phosphocholine + CoA. The enzyme catalyses a 1-acyl-sn-glycero-3-phosphate + an acyl-CoA = a 1,2-diacyl-sn-glycero-3-phosphate + CoA. It catalyses the reaction a 1-O-(1Z-alkenyl)-sn-glycero-3-phosphocholine + an acyl-CoA = a 1-O-(1Z-alkenyl)-2-acyl-sn-glycero-3-phosphocholine + CoA. The catalysed reaction is 1-hexadecanoyl-sn-glycero-3-phosphate + (9Z)-octadecenoyl-CoA = 1-hexadecanoyl-2-(9Z-octadecenoyl)-sn-glycero-3-phosphate + CoA. It carries out the reaction 1-(9Z-octadecenoyl)-sn-glycero-3-phosphate + (9Z)-octadecenoyl-CoA = 1,2-di-(9Z-octadecenoyl)-sn-glycero-3-phosphate + CoA. The enzyme catalyses 1-(9Z-octadecenoyl)-sn-glycero-3-phosphate + hexadecanoyl-CoA = 1-(9Z)-octadecenoyl-2-hexadecanoyl-sn-glycero-3-phosphate + CoA. It catalyses the reaction 1-heptadecanoyl-sn-glycero-3-phosphate + (9Z)-octadecenoyl-CoA = 1-heptadecanoyl-2-(9Z)-octadecenoyl-sn-glycero-3-phosphate + CoA. The catalysed reaction is 1-octadecanoyl-sn-glycero-3-phosphate + (9Z)-octadecenoyl-CoA = 1-octadecanoyl-2-(9Z-octadecenoyl)-sn-glycero-3-phosphate + CoA. It carries out the reaction heptadecanoyl-CoA + 1-(9Z-octadecenoyl)-sn-glycero-3-phosphate = 1-(9Z)-octadecenoyl-2-heptadecanoyl-sn-glycero-3-phosphate + CoA. The enzyme catalyses 1-(9Z-octadecenoyl)-sn-glycero-3-phosphate + (9Z,12Z)-octadecadienoyl-CoA = 1-(9Z)-octadecenoyl-2-(9Z,12Z)-octadecadienoyl-sn-glycero-3-phosphate + CoA. It catalyses the reaction 1-(9Z-octadecenoyl)-sn-glycero-3-phosphate + tetradecanoyl-CoA = 1-(9Z)-octadecenoyl-2-tetradecanoyl-sn-glycero-3-phosphate + CoA. The catalysed reaction is pentadecanoyl-CoA + 1-(9Z-octadecenoyl)-sn-glycero-3-phosphate = 1-(9Z)-octadecenoyl-2-pentadecanoyl-sn-glycero-3-phosphate + CoA. It carries out the reaction nonadecanoyl-CoA + 1-(9Z-octadecenoyl)-sn-glycero-3-phosphate = 1-(9Z)-octadecenoyl-2-nonadecanoyl-sn-glycero-3-phosphate + CoA. The enzyme catalyses 1-hexadecanoyl-sn-glycero-3-phosphocholine + (9Z)-octadecenoyl-CoA = 1-hexadecanoyl-2-(9Z-octadecenoyl)-sn-glycero-3-phosphocholine + CoA. It catalyses the reaction 1-O-hexadecyl-sn-glycero-3-phosphocholine + acetyl-CoA = 1-O-hexadecyl-2-acetyl-sn-glycero-3-phosphocholine + CoA. The catalysed reaction is 1-O-octadecyl-sn-glycero-3-phosphocholine + acetyl-CoA = 1-O-octadecyl-2-acetyl-sn-glycero-3-phosphocholine + CoA. It carries out the reaction 1-hexadecanoyl-sn-glycero-3-phosphocholine + acetyl-CoA = 1-hexadecanoyl-2-acetyl-sn-glycero-3-phosphocholine + CoA. The enzyme catalyses 1-octadecanoyl-sn-glycero-3-phosphocholine + acetyl-CoA = 1-octadecanoyl-2-acetyl-sn-glycero-3-phosphocholine + CoA. It catalyses the reaction a 1-O-(1Z-alkenyl)-sn-glycero-3-phosphocholine + acetyl-CoA = 1-O-(1Z)-alkenyl-2-acetyl-sn-glycero-3-phosphocholine + CoA. The catalysed reaction is 1-O-octadecyl-sn-glycero-3-phosphocholine + (5Z,8Z,11Z,14Z)-eicosatetraenoyl-CoA = 1-O-octadecyl-2-(5Z,8Z,11Z,14Z)-eicosatetraenoyl-sn-glycero-3-phosphocholine + CoA. The protein operates within lipid metabolism; phospholipid metabolism. Its function is as follows. Exhibits both acyltransferase and acetyltransferase activities. Activity is calcium-dependent. Catalyzes the conversion of lysophosphatidylcholine (1-acyl-sn-glycero-3-phosphocholine or LPC) into phosphatidylcholine (1,2-diacyl-sn-glycero-3-phosphocholine or PC). Catalyzes the conversion 1-acyl-sn-glycerol-3-phosphate (lysophosphatidic acid or LPA) into 1,2-diacyl-sn-glycerol-3-phosphate (phosphatidic acid or PA) by incorporating an acyl moiety at the sn-2 position of the glycerol backbone. Involved in platelet-activating factor (PAF) biosynthesis by catalyzing the conversion of the PAF precursor, 1-O-alkyl-sn-glycero-3-phosphocholine (lyso-PAF) into 1-O-alkyl-2-acetyl-sn-glycero-3-phosphocholine (PAF). This chain is Lysophosphatidylcholine acyltransferase 2 (lpcat2), found in Danio rerio (Zebrafish).